A 198-amino-acid chain; its full sequence is TM2 domain-containing protein 2 (198 aa).

Positions 1-27 (MRWPVPPLGYLLLGGQGLLLTFSLISS) are cleaved as a signal peptide. Over 28 to 128 (QNNTSPVTYP…FLRGNRPCIK (101 aa)) the chain is Extracellular. Asn29, Asn40, and Asn76 each carry an N-linked (GlcNAc...) asparagine glycan. The helical transmembrane segment at 129-149 (YTGHYFITTLLYSFFLGCFGV) threads the bilayer. A TM2 domain is found at 131 to 179 (GHYFITTLLYSFFLGCFGVDRFCLGHTGTAVGKLLTWGGLGIWWFVDLI). Topologically, residues 150–166 (DRFCLGHTGTAVGKLLT) are cytoplasmic. The chain crosses the membrane as a helical span at residues 167-187 (WGGLGIWWFVDLILLITGGLM). The Extracellular segment spans residues 188–198 (PSDNSNWCTIY).

It belongs to the TM2 family.

It localises to the membrane. The polypeptide is TM2 domain-containing protein 2 (tm2d2) (Xenopus laevis (African clawed frog)).